We begin with the raw amino-acid sequence, 654 residues long: WD repeat-containing protein 70 (654 aa).

Disordered regions lie at residues 1–26 (MERSGPSEVTGSDASGPDPQLAVTMG) and 43–175 (FEQT…DSHE). A compositionally biased stretch (basic and acidic residues) spans 45–78 (QTRRTAVERSRKTLEAREKEEEMNREKELRRQNE). The segment covering 99 to 111 (RDTSSSESEQSSD) has biased composition (low complexity). The segment covering 147-164 (NEEEEEAEEEEEEEEEEE) has biased composition (acidic residues). Residues 165–175 (NPVHKIPDSHE) show a composition bias toward basic and acidic residues. WD repeat units lie at residues 180 to 219 (HGTKTVSALGLDPSGARLVTGGYDYDVKFWDFAGMDASFK), 227 to 268 (CECH…ECIK), 281 to 321 (GHTA…KQKS), 330 to 369 (GKKVIPTTCTYSRDGNLIAAACQNGSIQIWDRNLTVHPKF), 376 to 415 (DSGTDTSCVTFSYDGNVLASRGGDDSLKLWDIRQFNKPLF), 421 to 466 (PTMF…RVYE), and 469 to 508 (ITDASVVRCLWHPKLNQIMVGTGNGLAKVYYDPNKSQRGA). Residue lysine 296 forms a Glycyl lysine isopeptide (Lys-Gly) (interchain with G-Cter in SUMO2) linkage. The residue at position 452 (lysine 452) is an N6-acetyllysine. The span at 540–565 (REPRQRSTRKQLEKDRLDPLKSHKPE) shows a compositional bias: basic and acidic residues. The interval 540–579 (REPRQRSTRKQLEKDRLDPLKSHKPEPPVAGPGRGGRVGT) is disordered. Threonine 579 bears the Phosphothreonine mark. Glycyl lysine isopeptide (Lys-Gly) (interchain with G-Cter in SUMO2) cross-links involve residues lysine 590 and lysine 596. A phosphoserine mark is found at serine 621 and serine 638. The interval 630–654 (KTMFAQVESDDEEAKNEPEWKKRKI) is disordered. The span at 644-654 (KNEPEWKKRKI) shows a compositional bias: basic and acidic residues.

This sequence belongs to the WD repeat GAD-1 family.

The chain is WD repeat-containing protein 70 (WDR70) from Homo sapiens (Human).